The primary structure comprises 1390 residues: Nuclear pore complex protein Nup155 (1390 aa).

A glycan (O-linked (GlcNAc) serine) is linked at S525. Residues 598–632 (GSPMYSSSPVPTGSPYPNPSSLGTPSHGAQPPTMS) form a disordered region. Residue K739 forms a Glycyl lysine isopeptide (Lys-Gly) (interchain with G-Cter in SUMO2) linkage. Residues 984-1011 (QSKAAPQSPSVPKKPGPPVLSSDPNMLS) are disordered. Position 1056 is a phosphoserine (S1056).

This sequence belongs to the non-repetitive/WGA-negative nucleoporin family. Interacts with GLE1. Able to form a heterotrimer with GLE1 and NUP42 in vitro. Forms a complex with NUP35, NUP93, NUP205 and lamin B. In terms of processing, phosphorylated. Phosphorylation and dephosphorylation may be important for the function of NUP155 and may play a role in the reversible disassembly of the nuclear pore complex during mitosis. Disulfide-linked to NUP62. The inner channel of the NPC has a different redox environment from the cytoplasm and allows the formation of interchain disulfide bonds between some nucleoporins, the significant increase of these linkages upon oxidative stress reduces the permeability of the NPC.

Its subcellular location is the nucleus. It localises to the nuclear pore complex. The protein localises to the nucleus membrane. Functionally, essential component of nuclear pore complex. Could be essessential for embryogenesis. Nucleoporins may be involved both in binding and translocating proteins during nucleocytoplasmic transport. The polypeptide is Nuclear pore complex protein Nup155 (Nup155) (Rattus norvegicus (Rat)).